The sequence spans 699 residues: MNPIVKSFEYGQHTVTLETGVIARQADAAVLASMGDTTVLVTVVGKKEAEAGRDFFPLTVNYQEKTYAAGKIPGGFFKREGRPSEDETLIARLIDRPIRPLFPNGFTNEVQVIITVVSVDPQIEPDIISMIGTSAALAISGIPFSGPLGAARVGYINGEYVLNPTVTQLESSQLNLVVAGTESAVLMVESEAQALPEEVMLGSVVYGHDQQQVVIKAIAEFKAEAGKPAWNWTAPVANEALVAQVKELAEDGLAQAYQIQVKQDRYAQVAVVKAAAKEALLAANPDVDLREVDGLLGSLEKKVVRGRIIRGEPRIDGREPDMVRALSVLAGVLPRTHGSALFTRGETQALVTCTLGTERDAQKIDSIMGERTNRFMLHYNFPPYSVGETGMVGSPKRREIGHGKLAWRGINAVMPTAEEFPYSVRVVSEITESNGSSSMASVCGTSLALMDAGVPIKTSVAGIAMGLVKEGDNFVVLSDILGDEDHLGDMDFKVAGTRDGVTALQMDIKIEGITKEIMEIALQQAYGARVHILNVMDQAIGSHRDDISDHAPRITTIKINPEKIRDVIGKGGAVIRALTEETGTTIELEDDGTVKIASSNGDATREAIRRIEEITSEVEVGRIYNGKVIRIVDFGAFVNILPGKDGLVHISQISDERVANVSDHLELNQEVTVKVMEVDRQGRVRLSIKEAQTKEAAAE.

Residues aspartate 485 and aspartate 491 each contribute to the Mg(2+) site. Residues 552-611 enclose the KH domain; it reads PRITTIKINPEKIRDVIGKGGAVIRALTEETGTTIELEDDGTVKIASSNGDATREAIRRI. Residues 621–689 enclose the S1 motif domain; the sequence is GRIYNGKVIR…RQGRVRLSIK (69 aa).

It belongs to the polyribonucleotide nucleotidyltransferase family. Component of the RNA degradosome, which is a multiprotein complex involved in RNA processing and mRNA degradation. Mg(2+) serves as cofactor.

The protein resides in the cytoplasm. It carries out the reaction RNA(n+1) + phosphate = RNA(n) + a ribonucleoside 5'-diphosphate. Its function is as follows. Involved in mRNA degradation. Catalyzes the phosphorolysis of single-stranded polyribonucleotides processively in the 3'- to 5'-direction. The chain is Polyribonucleotide nucleotidyltransferase from Shewanella sp. (strain ANA-3).